A 227-amino-acid polypeptide reads, in one-letter code: tRNA (guanine-N(1)-)-methyltransferase (227 aa).

S-adenosyl-L-methionine is bound by residues G107 and 127–132 (LGDFIL).

Belongs to the RNA methyltransferase TrmD family. Homodimer.

The protein resides in the cytoplasm. It catalyses the reaction guanosine(37) in tRNA + S-adenosyl-L-methionine = N(1)-methylguanosine(37) in tRNA + S-adenosyl-L-homocysteine + H(+). Functionally, specifically methylates guanosine-37 in various tRNAs. The sequence is that of tRNA (guanine-N(1)-)-methyltransferase from Mesomycoplasma hyopneumoniae (strain 232) (Mycoplasma hyopneumoniae).